The chain runs to 460 residues: Sexual development regulator velC (460 aa).

3 disordered regions span residues 67–131 (VGPD…PQAP), 152–216 (YAPR…RPDP), and 422–460 (KKGNDRSKNTRSHDDSSDGEQDEGEATLQGKRRRRSARQ). A compositionally biased stretch (polar residues) spans 192 to 207 (PVTTNGRPPDSNSPMV). The 184-residue stretch at 239–422 (LSDNRFNLQI…KEQGCIISIK (184 aa)) folds into the Velvet domain. A compositionally biased stretch (basic and acidic residues) spans 423 to 437 (KGNDRSKNTRSHDDS). The span at 451–460 (GKRRRRSARQ) shows a compositional bias: basic residues.

This sequence belongs to the velvet family. VelC subfamily. Interacts with VE1.

The protein localises to the nucleus. Velvet-domain-containing protein that acts as a positive regulator of sexual development. Dispensable for regulation of conidial size, hyphal hydrophobicity, fumonisin production, and oxidant resistance. This chain is Sexual development regulator velC, found in Gibberella moniliformis (strain M3125 / FGSC 7600) (Maize ear and stalk rot fungus).